Consider the following 245-residue polypeptide: DNA polymerase sliding clamp (245 aa).

This sequence belongs to the PCNA family. Homotrimer. The subunits circularize to form a toroid; DNA passes through its center. Replication factor C (RFC) is required to load the toroid on the DNA.

Its function is as follows. Sliding clamp subunit that acts as a moving platform for DNA processing. Responsible for tethering the catalytic subunit of DNA polymerase and other proteins to DNA during high-speed replication. This Methanosarcina mazei (strain ATCC BAA-159 / DSM 3647 / Goe1 / Go1 / JCM 11833 / OCM 88) (Methanosarcina frisia) protein is DNA polymerase sliding clamp.